The primary structure comprises 267 residues: Pyridoxine/pyridoxamine 5'-phosphate oxidase (267 aa).

Substrate is bound by residues R20–Y23 and K80. Residues R75–K80, Y90–T91, R96, K97, and Q119 each bind FMN. Positions 137, 141, and 145 each coordinate substrate. FMN contacts are provided by residues Q154–S155 and W200. Substrate is bound at residue R206–H208. FMN is bound at residue R210.

This sequence belongs to the pyridoxamine 5'-phosphate oxidase family. Homodimer. The cofactor is FMN.

It catalyses the reaction pyridoxamine 5'-phosphate + O2 + H2O = pyridoxal 5'-phosphate + H2O2 + NH4(+). It carries out the reaction pyridoxine 5'-phosphate + O2 = pyridoxal 5'-phosphate + H2O2. It functions in the pathway cofactor metabolism; pyridoxal 5'-phosphate salvage; pyridoxal 5'-phosphate from pyridoxamine 5'-phosphate: step 1/1. Its pathway is cofactor metabolism; pyridoxal 5'-phosphate salvage; pyridoxal 5'-phosphate from pyridoxine 5'-phosphate: step 1/1. Catalyzes the oxidation of either pyridoxine 5'-phosphate (PNP) or pyridoxamine 5'-phosphate (PMP) into pyridoxal 5'-phosphate (PLP). In Frankia casuarinae (strain DSM 45818 / CECT 9043 / HFP020203 / CcI3), this protein is Pyridoxine/pyridoxamine 5'-phosphate oxidase.